A 208-amino-acid chain; its full sequence is Dephospho-CoA kinase (208 aa).

Positions 8 to 208 (LVGVTGGIGS…VYQSLLTVVE (201 aa)) constitute a DPCK domain. 16–21 (GSGKST) contributes to the ATP binding site.

This sequence belongs to the CoaE family.

It is found in the cytoplasm. The enzyme catalyses 3'-dephospho-CoA + ATP = ADP + CoA + H(+). The protein operates within cofactor biosynthesis; coenzyme A biosynthesis; CoA from (R)-pantothenate: step 5/5. Functionally, catalyzes the phosphorylation of the 3'-hydroxyl group of dephosphocoenzyme A to form coenzyme A. The polypeptide is Dephospho-CoA kinase (Chlorobaculum tepidum (strain ATCC 49652 / DSM 12025 / NBRC 103806 / TLS) (Chlorobium tepidum)).